The primary structure comprises 218 residues: Protein GrpE (218 aa).

Basic and acidic residues predominate over residues 1–21 (MSDKQREAERQQSEDKAHSEA). Residues 1-66 (MSDKQREAER…LEEARARAEE (66 aa)) are disordered. Residues 24–36 (AEAGQAPEAQAAE) show a composition bias toward low complexity.

Belongs to the GrpE family. In terms of assembly, homodimer.

The protein resides in the cytoplasm. Its function is as follows. Participates actively in the response to hyperosmotic and heat shock by preventing the aggregation of stress-denatured proteins, in association with DnaK and GrpE. It is the nucleotide exchange factor for DnaK and may function as a thermosensor. Unfolded proteins bind initially to DnaJ; upon interaction with the DnaJ-bound protein, DnaK hydrolyzes its bound ATP, resulting in the formation of a stable complex. GrpE releases ADP from DnaK; ATP binding to DnaK triggers the release of the substrate protein, thus completing the reaction cycle. Several rounds of ATP-dependent interactions between DnaJ, DnaK and GrpE are required for fully efficient folding. This is Protein GrpE from Alkalilimnicola ehrlichii (strain ATCC BAA-1101 / DSM 17681 / MLHE-1).